Consider the following 317-residue polypeptide: Olfactory receptor 6Q1 (317 aa).

Over 1–27 (MQPYTKNWTQVTEFVMMGFAGIHEAHL) the chain is Extracellular. Residue Asn-7 is glycosylated (N-linked (GlcNAc...) asparagine). Residues 28 to 48 (LFFILFLTMYLFTLVENLAII) traverse the membrane as a helical segment. At 49 to 56 (LVVGLDHR) the chain is on the cytoplasmic side. Residues 57–77 (LRRPMYFFLTHLSCLEIWYTS) form a helical membrane-spanning segment. Residues 78–103 (VTVPKMLAGFIGVDGGKNISYADCLS) are Extracellular-facing. N-linked (GlcNAc...) asparagine glycosylation is present at Asn-95. Cys-101 and Cys-193 form a disulfide bridge. Residues 104 to 124 (QLFIFTFLGATECFLLAAMAY) traverse the membrane as a helical segment. Topologically, residues 125–143 (DRYVAICMPLHYGAFVSWG) are cytoplasmic. Residues 144–164 (TCIRLAAACWLVGFLTPILPI) traverse the membrane as a helical segment. Over 165–201 (YLLSQLTFYGPNVIDHFSCDASPLLALSCSDVTWKET) the chain is Extracellular. The helical transmembrane segment at 202-221 (VDFLVSLAVLLASSMVIAVS) threads the bilayer. Residues 222 to 241 (YGNIVWTLLHIRSAAERWKA) lie on the Cytoplasmic side of the membrane. A helical transmembrane segment spans residues 242–262 (FSTCAAHLTVVSLFYGTLFFM). The Extracellular segment spans residues 263–275 (YVQTKVTSSINFN). The chain crosses the membrane as a helical span at residues 276-296 (KVVSVFYSVVTPMLNPLIYSL). At 297 to 317 (RNKEVKGALGRVFSLNFWKGQ) the chain is on the cytoplasmic side.

Belongs to the G-protein coupled receptor 1 family.

The protein localises to the cell membrane. Odorant receptor. The protein is Olfactory receptor 6Q1 (OR6Q1) of Homo sapiens (Human).